Reading from the N-terminus, the 745-residue chain is Junction plakoglobin (745 aa).

Methionine 1 is modified (N-acetylmethionine). Threonine 14 carries O-linked (GlcNAc) threonine glycosylation. 2 positions are modified to phosphoserine: serine 99 and serine 125. 12 ARM repeats span residues 132–171 (NYQD…QLSK), 172–215 (KEAS…LSHH), 216–255 (REGL…NLLL), 258–297 (EGAK…LLAY), 298–341 (GNQE…LSVC), 342–381 (PSNK…NLSD), 383–420 (ATKQ…NLTC), 423–464 (SKNK…HLTS), 470–510 (EMAQ…NLAL), 512–551 (PANH…QPYT), 574–613 (PMNR…ELAQ), and 615–661 (KEAA…PDYR). Residues 132 to 297 (NYQDDAELAT…TTDCLQLLAY (166 aa)) form an interaction with DSC1 and DSG1 region. Serine 182 is modified (phosphoserine). An interaction with DSC1 region spans residues 574–661 (PMNRMEIFRL…ISEDKNPDYR (88 aa)). Phosphoserine is present on residues serine 665 and serine 730.

Belongs to the beta-catenin family. Homodimer. Component of an E-cadherin/catenin adhesion complex composed of at least E-cadherin/CDH1 and gamma-catenin/JUP, and possibly alpha-catenin/CTNNA1; the complex is located to adherens junctions. The stable association of CTNNA1 is controversial as CTNNA1 was shown not to bind to F-actin when assembled in the complex. Interacts with MUC1. Interacts with CAV1. Interacts with PTPRJ. Interacts with DSG1. Interacts with DSC1 and DSC2. Interacts with PKP2. Interacts with PKP3 (via N-terminus); the interaction is required for PKP3 localization to desmosome cell-cell junctions. Interacts with DSG4. May be phosphorylated by FER. As to expression, expressed in the mammary epithelium (at protein level).

The protein resides in the cell junction. The protein localises to the adherens junction. It is found in the desmosome. It localises to the cytoplasm. Its subcellular location is the cytoskeleton. The protein resides in the cell membrane. The protein localises to the nucleus. Its function is as follows. Common junctional plaque protein. The membrane-associated plaques are architectural elements in an important strategic position to influence the arrangement and function of both the cytoskeleton and the cells within the tissue. The presence of plakoglobin in both the desmosomes and in the intermediate junctions suggests that it plays a central role in the structure and function of submembranous plaques. Acts as a substrate for VE-PTP and is required by it to stimulate VE-cadherin function in endothelial cells. Can replace beta-catenin in E-cadherin/catenin adhesion complexes which are proposed to couple cadherins to the actin cytoskeleton. This chain is Junction plakoglobin, found in Mus musculus (Mouse).